The primary structure comprises 340 residues: DNA-directed RNA polymerase subunit alpha (340 aa).

An alpha N-terminal domain (alpha-NTD) region spans residues 1 to 233 (MYRNWRDLIS…EQLSIFINFD (233 aa)). An alpha C-terminal domain (alpha-CTD) region spans residues 251–340 (VNENLYRSVD…RIRGERKDEE (90 aa)).

It belongs to the RNA polymerase alpha chain family. Homodimer. The RNAP catalytic core consists of 2 alpha, 1 beta, 1 beta' and 1 omega subunit. When a sigma factor is associated with the core the holoenzyme is formed, which can initiate transcription.

The enzyme catalyses RNA(n) + a ribonucleoside 5'-triphosphate = RNA(n+1) + diphosphate. DNA-dependent RNA polymerase catalyzes the transcription of DNA into RNA using the four ribonucleoside triphosphates as substrates. The chain is DNA-directed RNA polymerase subunit alpha from Geobacter metallireducens (strain ATCC 53774 / DSM 7210 / GS-15).